Reading from the N-terminus, the 305-residue chain is NAD-dependent protein deacylase SIR4 (305 aa).

The transit peptide at 1-10 directs the protein to the mitochondrion; the sequence is MSAQVMHNRV. The 295-residue stretch at 11–305 folds into the Deacetylase sirtuin-type domain; sequence MGTVKDSASK…VLEELASTIR (295 aa). Residues 37–57 and 118–121 contribute to the NAD(+) site; these read GAGVSTDSGIPDYRGPQGIYS and QNVD. His139 (proton acceptor) is an active-site residue. The Zn(2+) site is built by Cys147, Cys150, Cys209, and Cys212. Residues 249–251, 275–277, and Ser293 contribute to the NAD(+) site; these read GSS and NLG.

It belongs to the sirtuin family. Class II subfamily. Zn(2+) serves as cofactor.

The protein localises to the mitochondrion matrix. The catalysed reaction is N(6)-acetyl-L-lysyl-[protein] + NAD(+) + H2O = 2''-O-acetyl-ADP-D-ribose + nicotinamide + L-lysyl-[protein]. In terms of biological role, NAD-dependent protein deacylase. Catalyzes the NAD-dependent hydrolysis of acyl groups from lysine residues. The protein is NAD-dependent protein deacylase SIR4 of Batrachochytrium dendrobatidis (strain JAM81 / FGSC 10211) (Frog chytrid fungus).